The sequence spans 117 residues: Acidic phospholipase A2 PA-1G (117 aa).

7 disulfides stabilise this stretch: Cys11–Cys71, Cys27–Cys117, Cys29–Cys45, Cys44–Cys98, Cys51–Cys91, Cys60–Cys84, and Cys78–Cys89. 3 residues coordinate Ca(2+): Tyr28, Gly30, and Gly32. His48 is an active-site residue. Asp49 contributes to the Ca(2+) binding site. Residue Asp92 is part of the active site.

This sequence belongs to the phospholipase A2 family. Group I subfamily. D49 sub-subfamily. Ca(2+) is required as a cofactor. Expressed by the venom gland.

Its subcellular location is the secreted. It carries out the reaction a 1,2-diacyl-sn-glycero-3-phosphocholine + H2O = a 1-acyl-sn-glycero-3-phosphocholine + a fatty acid + H(+). PLA2 catalyzes the calcium-dependent hydrolysis of the 2-acyl groups in 3-sn-phosphoglycerides. This Pseudechis australis (Mulga snake) protein is Acidic phospholipase A2 PA-1G.